The chain runs to 475 residues: Ribulose bisphosphate carboxylase large chain (475 aa).

Positions methionine 1–serine 2 are excised as a propeptide. Position 3 is an N-acetylproline (proline 3). Lysine 14 carries the N6,N6,N6-trimethyllysine modification. Residues asparagine 123 and threonine 173 each contribute to the substrate site. The Proton acceptor role is filled by lysine 175. Lysine 177 contributes to the substrate binding site. Mg(2+)-binding residues include lysine 201, aspartate 203, and glutamate 204. Lysine 201 bears the N6-carboxylysine mark. The active-site Proton acceptor is histidine 294. Residues arginine 295, histidine 327, and serine 379 each contribute to the substrate site.

Belongs to the RuBisCO large chain family. Type I subfamily. As to quaternary structure, heterohexadecamer of 8 large chains and 8 small chains. Requires Mg(2+) as cofactor.

The protein resides in the plastid. Its subcellular location is the chloroplast. The enzyme catalyses 2 (2R)-3-phosphoglycerate + 2 H(+) = D-ribulose 1,5-bisphosphate + CO2 + H2O. It catalyses the reaction D-ribulose 1,5-bisphosphate + O2 = 2-phosphoglycolate + (2R)-3-phosphoglycerate + 2 H(+). RuBisCO catalyzes two reactions: the carboxylation of D-ribulose 1,5-bisphosphate, the primary event in carbon dioxide fixation, as well as the oxidative fragmentation of the pentose substrate in the photorespiration process. Both reactions occur simultaneously and in competition at the same active site. This Coleochaete orbicularis (Charophycean green alga) protein is Ribulose bisphosphate carboxylase large chain.